The sequence spans 572 residues: Dihydroxy-acid dehydratase (572 aa).

C54 is a [2Fe-2S] cluster binding site. A Mg(2+)-binding site is contributed by D86. C127 contributes to the [2Fe-2S] cluster binding site. Residues D128 and K129 each contribute to the Mg(2+) site. Residue K129 is modified to N6-carboxylysine. C199 provides a ligand contact to [2Fe-2S] cluster. Mg(2+) is bound at residue E449. The Proton acceptor role is filled by S475.

Belongs to the IlvD/Edd family. Homodimer. [2Fe-2S] cluster is required as a cofactor. The cofactor is Mg(2+).

It catalyses the reaction (2R)-2,3-dihydroxy-3-methylbutanoate = 3-methyl-2-oxobutanoate + H2O. It carries out the reaction (2R,3R)-2,3-dihydroxy-3-methylpentanoate = (S)-3-methyl-2-oxopentanoate + H2O. It participates in amino-acid biosynthesis; L-isoleucine biosynthesis; L-isoleucine from 2-oxobutanoate: step 3/4. It functions in the pathway amino-acid biosynthesis; L-valine biosynthesis; L-valine from pyruvate: step 3/4. In terms of biological role, functions in the biosynthesis of branched-chain amino acids. Catalyzes the dehydration of (2R,3R)-2,3-dihydroxy-3-methylpentanoate (2,3-dihydroxy-3-methylvalerate) into 2-oxo-3-methylpentanoate (2-oxo-3-methylvalerate) and of (2R)-2,3-dihydroxy-3-methylbutanoate (2,3-dihydroxyisovalerate) into 2-oxo-3-methylbutanoate (2-oxoisovalerate), the penultimate precursor to L-isoleucine and L-valine, respectively. In Pelagibacter ubique (strain HTCC1062), this protein is Dihydroxy-acid dehydratase.